The sequence spans 340 residues: MPGWLTLPTLCRFLLWAFTIFHKAQGDPASHPGPHYLLPPIHEVIHSHRGATATLPCVLGTTPPSYKVRWSKVEPGELRETLILITNGLHARGYGPLGGRARMRRGHRLDASLVIAGVRLEDEGRYRCELINGIEDESVALTLSLEGVVFPYQPSRGRYQFNYYEAKQACEEQDGRLATYSQLYQAWTEGLDWCNAGWLLEGSVRYPVLTARAPCGGRGRPGIRSYGPRDRMRDRYDAFCFTSALAGQVFFVPGRLTLSEAHAACRRRGAVVAKVGHLYAAWKFSGLDQCDGGWLADGSVRFPITTPRPRCGGLPDPGVRSFGFPRPQQAAYGTYCYAEN.

Positions 1–26 (MPGWLTLPTLCRFLLWAFTIFHKAQG) are cleaved as a signal peptide. Positions 34–144 (PHYLLPPIHE…EDESVALTLS (111 aa)) constitute an Ig-like V-type domain. Disulfide bonds link Cys-57-Cys-128, Cys-170-Cys-240, Cys-194-Cys-215, Cys-265-Cys-336, and Cys-290-Cys-311. Link domains lie at 148-242 (VVFP…FCFT) and 245-338 (LAGQ…YCYA).

It belongs to the HAPLN family. As to expression, expressed only in adult brain.

It is found in the secreted. Its subcellular location is the extracellular space. The protein resides in the extracellular matrix. Mediates a firm binding of versican V2 to hyaluronic acid. May play a pivotal role in the formation of the hyaluronan-associated matrix in the central nervous system (CNS) which facilitates neuronal conduction and general structural stabilization. Binds to hyaluronic acid. The sequence is that of Hyaluronan and proteoglycan link protein 2 (HAPLN2) from Homo sapiens (Human).